Consider the following 105-residue polypeptide: Large ribosomal subunit protein eL36 (105 aa).

The disordered stretch occupies residues 86–105 (QAGKKKRDDIANINRKASAK).

Belongs to the eukaryotic ribosomal protein eL36 family.

The polypeptide is Large ribosomal subunit protein eL36 (rpl36) (Dictyostelium discoideum (Social amoeba)).